A 361-amino-acid polypeptide reads, in one-letter code: UDP-N-acetylglucosamine--N-acetylmuramyl-(pentapeptide) pyrophosphoryl-undecaprenol N-acetylglucosamine transferase (361 aa).

UDP-N-acetyl-alpha-D-glucosamine contacts are provided by residues 13 to 15 (TGG), Asn125, Arg167, Ser196, Ile251, 270 to 275 (ALTVTE), and Gln296.

It belongs to the glycosyltransferase 28 family. MurG subfamily.

The protein resides in the cell inner membrane. It catalyses the reaction di-trans,octa-cis-undecaprenyl diphospho-N-acetyl-alpha-D-muramoyl-L-alanyl-D-glutamyl-meso-2,6-diaminopimeloyl-D-alanyl-D-alanine + UDP-N-acetyl-alpha-D-glucosamine = di-trans,octa-cis-undecaprenyl diphospho-[N-acetyl-alpha-D-glucosaminyl-(1-&gt;4)]-N-acetyl-alpha-D-muramoyl-L-alanyl-D-glutamyl-meso-2,6-diaminopimeloyl-D-alanyl-D-alanine + UDP + H(+). Its pathway is cell wall biogenesis; peptidoglycan biosynthesis. In terms of biological role, cell wall formation. Catalyzes the transfer of a GlcNAc subunit on undecaprenyl-pyrophosphoryl-MurNAc-pentapeptide (lipid intermediate I) to form undecaprenyl-pyrophosphoryl-MurNAc-(pentapeptide)GlcNAc (lipid intermediate II). This Psychrobacter cryohalolentis (strain ATCC BAA-1226 / DSM 17306 / VKM B-2378 / K5) protein is UDP-N-acetylglucosamine--N-acetylmuramyl-(pentapeptide) pyrophosphoryl-undecaprenol N-acetylglucosamine transferase.